Here is a 534-residue protein sequence, read N- to C-terminus: MLGPATFLPLTAALLLLIPGGRAQFPRQCVTPEALRSGQCCPGLFPALTPDPADRCGASVGRGRCAPLQVDARPHGPQYPHDGVDDREQWPTRFFNNSCLCAENFSGYDCGSCKPGWVGVNCNQRVLAVRRNILDLTAQERRRFIAALDLAKRTTHPHYVIASRRYAEIMGPDGNSTQFENVSIYNFFVWTHYYSIGKTFLGAGRESFGGIDFSHEGPAFVTWHRYHLLQLERDMQEMLQDPTFALPYWNFAIGGNECDICTDDFMGARSNFDSILLSSNSVFSQWRVLCESLEGYDTLGTICNSTEGGPIRRNPGGNVARPMVQRLPEPQDVALCLEVGLFDTPPFYSNSSESFRNTVEGYSEPSGKYDPSVRSLHNLAHLFLNGTGGQTHVSPNDPIFVLLHTFTDAVFDEWLRRHNADISLYPLENAPIGHNRQYNMVPFWPPVSNNEMFVTAPESLGYSYEVQWPSRALNFTEIITIAVVAALVLVAVIFAAASCAVHRSRKDDVHQPLLGEQYPRYSEEYERDASQSAV.

Positions 1–23 (MLGPATFLPLTAALLLLIPGGRA) are cleaved as a signal peptide. The Lumenal, melanosome portion of the chain corresponds to 24–477 (QFPRQCVTPE…WPSRALNFTE (454 aa)). 5 disulfides stabilise this stretch: cysteine 29–cysteine 40, cysteine 41–cysteine 65, cysteine 56–cysteine 99, cysteine 101–cysteine 110, and cysteine 113–cysteine 122. Residues asparagine 96 and asparagine 104 are each glycosylated (N-linked (GlcNAc...) asparagine). Residues asparagine 175 and asparagine 181 are each glycosylated (N-linked (GlcNAc...) asparagine). 3 residues coordinate Zn(2+): histidine 192, histidine 215, and histidine 224. 2 disulfide bridges follow: cysteine 258/cysteine 261 and cysteine 290/cysteine 303. N-linked (GlcNAc...) asparagine glycosylation is found at asparagine 304 and asparagine 350. Zn(2+) contacts are provided by histidine 377 and histidine 381. Asparagine 385 carries N-linked (GlcNAc...) asparagine glycosylation. Histidine 404 is a binding site for Zn(2+). A helical transmembrane segment spans residues 478–501 (IITIAVVAALVLVAVIFAAASCAV). At 502–534 (HRSRKDDVHQPLLGEQYPRYSEEYERDASQSAV) the chain is on the cytoplasmic side.

Belongs to the tyrosinase family. Cu(2+) is required as a cofactor. Zn(2+) serves as cofactor.

The protein localises to the melanosome membrane. It carries out the reaction 2 5,6-dihydroxyindole-2-carboxylate + O2 = 2 indole-5,6-quinone-2-carboxylate + 2 H2O. It participates in pigment biosynthesis; melanin biosynthesis. Functionally, plays a role in melanin biosynthesis. Catalyzes the oxidation of 5,6-dihydroxyindole-2-carboxylic acid (DHICA) into indole-5,6-quinone-2-carboxylic acid. May regulate or influence the type of melanin synthesized. Also to a lower extent, capable of hydroxylating tyrosine and producing melanin. This is 5,6-dihydroxyindole-2-carboxylic acid oxidase (TYRP1) from Ambystoma mexicanum (Axolotl).